Consider the following 708-residue polypeptide: Matrix metalloproteinase-9 (708 aa).

Positions 1–19 (MSPWQPLLLVLLALGYSFA) are cleaved as a signal peptide. Positions 20-107 (APHQRQPTYV…PRCGVPDVGK (88 aa)) are cleaved as a propeptide — activation peptide. N39 carries N-linked (GlcNAc...) asparagine glycosylation. A Cysteine switch motif is present at residues 98–105 (PRCGVPDV). C100 provides a ligand contact to Zn(2+). A glycan (N-linked (GlcNAc...) asparagine) is linked at N121. Ca(2+) contacts are provided by D132 and D166. 2 residues coordinate Zn(2+): H176 and D178. Residues D183, G184, D186, and L188 each coordinate Ca(2+). H191 contributes to the Zn(2+) binding site. Residues G198, Q200, and D202 each contribute to the Ca(2+) site. Zn(2+) is bound at residue H204. The Ca(2+) site is built by D206, D207, and E209. Fibronectin type-II domains lie at 226–274 (ANGA…FCPS), 284–332 (GDGK…FCPT), and 343–391 (SAGE…FCPD). 6 disulfides stabilise this stretch: C231-C257, C245-C272, C289-C315, C303-C330, C348-C374, and C362-C389. H402 serves as a coordination point for Zn(2+). E403 is a catalytic residue. Zn(2+)-binding residues include H406 and H412. A disordered region spans residues 441–520 (HHLYGRGSKP…SSTPDDNPCN (80 aa)). Over residues 480 to 490 (PTGGPTVAPTG) the composition is skewed to low complexity. Over residues 491-502 (APSPGPTGPPTA) the composition is skewed to pro residues. C519 and C707 are disulfide-bonded. Hemopexin repeat units follow at residues 521 to 566 (VDVF…WPAF), 567 to 611 (PSKL…GLGS), 613 to 660 (VTLV…FSGV), and 661 to 707 (PWNS…LLQC).

It belongs to the peptidase M10A family. As to quaternary structure, exists as monomer or homodimer; disulfide-linked. Also exists as heterodimer with LCN2. Macrophages and transformed cell lines produce only the monomeric form. Interacts with ECM1. Requires Zn(2+) as cofactor. Ca(2+) is required as a cofactor. N- and O-glycosylated.

It is found in the secreted. The protein resides in the extracellular space. Its subcellular location is the extracellular matrix. It catalyses the reaction Cleavage of gelatin types I and V and collagen types IV and V.. Its function is as follows. Matrix metalloproteinase that plays an essential role in local proteolysis of the extracellular matrix and in leukocyte migration. Could play a role in bone osteoclastic resorption. Cleaves KiSS1 at a Gly-|-Leu bond. Cleaves NINJ1 to generate the Secreted ninjurin-1 form. Cleaves type IV and type V collagen into large C-terminal three quarter fragments and shorter N-terminal one quarter fragments. Degrades fibronectin but not laminin or Pz-peptide. This is Matrix metalloproteinase-9 (Mmp9) from Rattus norvegicus (Rat).